The chain runs to 336 residues: Uroporphyrinogen decarboxylase (336 aa).

Substrate-binding positions include 24–28 (RQVGR), aspartate 73, tyrosine 142, serine 197, and histidine 312.

The protein belongs to the uroporphyrinogen decarboxylase family. Homodimer.

It is found in the cytoplasm. It carries out the reaction uroporphyrinogen III + 4 H(+) = coproporphyrinogen III + 4 CO2. It functions in the pathway porphyrin-containing compound metabolism; protoporphyrin-IX biosynthesis; coproporphyrinogen-III from 5-aminolevulinate: step 4/4. Catalyzes the decarboxylation of four acetate groups of uroporphyrinogen-III to yield coproporphyrinogen-III. In Chlamydia trachomatis serovar L2 (strain ATCC VR-902B / DSM 19102 / 434/Bu), this protein is Uroporphyrinogen decarboxylase.